Reading from the N-terminus, the 299-residue chain is Meso-diaminopimelate D-dehydrogenase (299 aa).

NADP(+)-binding positions include 11 to 14 (YGNI), Arg-36, 67 to 70 (CTPT), 90 to 92 (SFD), and 119 to 123 (AGWDP). Substrate-binding positions include Asp-92, Asp-122, Phe-146, 152 to 153 (MG), Thr-171, Arg-181, His-227, and Asn-253.

Belongs to the diaminopimelate dehydrogenase family. In terms of assembly, homodimer.

The enzyme catalyses meso-2,6-diaminopimelate + NADP(+) + H2O = (S)-2-amino-6-oxoheptanedioate + NH4(+) + NADPH + H(+). It functions in the pathway amino-acid biosynthesis; L-lysine biosynthesis via DAP pathway; DL-2,6-diaminopimelate from (S)-tetrahydrodipicolinate: step 1/1. In terms of biological role, catalyzes the reversible NADPH-dependent reductive amination of L-2-amino-6-oxopimelate, the acyclic form of L-tetrahydrodipicolinate, to generate the meso compound, D,L-2,6-diaminopimelate. Probably plays a role in lysine biosynthesis. Exhibits a high substrate specificity for meso-2,6-diaminopimelate (m-DAP), since the activity with L,L-2,6-diaminopimelate is less than 5% of the activity observed with m-DAP. Can use NAD(+) only very poorly since the activity observed in the presence of NAD(+) is about 14% of that with NADP(+). This chain is Meso-diaminopimelate D-dehydrogenase (ddh), found in Bacteroides fragilis (strain ATCC 25285 / DSM 2151 / CCUG 4856 / JCM 11019 / LMG 10263 / NCTC 9343 / Onslow / VPI 2553 / EN-2).